A 330-amino-acid chain; its full sequence is MKTAYIAKQRQISFVKSHFSRQLEERLGLIEVQAPILSRVGDGTQDNLSGCEKAVQVKVKALPDAQFEVVHSLAKWKRQTLGQHDFSAGEGLYTHMKALRPDEDRLSPLHSVYVDQWDWERVMADGERQFSTLKSTVEAIWAGIKATEAAVSEEFGLAPFLPDQIHFVHSQELLSRYPNLDAKGRERAIAKDLGAVFLVGIGGKLSDGHRHDVRAPDYDDWSTPSELGYAGLNGDILVWNPVLEDAFELSSMGIRVDADTLKHQLALTGDEDRLQLEWHQALLRGEMPQTIGGGIGQSRLTMLLLQLPHIGQVQCGVWSAAVRESVPSLL.

It belongs to the class-II aminoacyl-tRNA synthetase family. AsnA subfamily.

The protein localises to the cytoplasm. It carries out the reaction L-aspartate + NH4(+) + ATP = L-asparagine + AMP + diphosphate + H(+). The protein operates within amino-acid biosynthesis; L-asparagine biosynthesis; L-asparagine from L-aspartate (ammonia route): step 1/1. The polypeptide is Aspartate--ammonia ligase (Escherichia coli (strain SMS-3-5 / SECEC)).